The following is a 224-amino-acid chain: Flagellar L-ring protein (224 aa).

The signal sequence occupies residues 1–15 (MARYLLLASTLLLAA). C16 carries N-palmitoyl cysteine lipidation. C16 carries the S-diacylglycerol cysteine lipid modification.

The protein belongs to the FlgH family. In terms of assembly, the basal body constitutes a major portion of the flagellar organelle and consists of four rings (L,P,S, and M) mounted on a central rod.

It is found in the cell outer membrane. The protein resides in the bacterial flagellum basal body. Functionally, assembles around the rod to form the L-ring and probably protects the motor/basal body from shearing forces during rotation. The polypeptide is Flagellar L-ring protein (Shewanella sp. (strain ANA-3)).